The chain runs to 453 residues: Calcium-binding tyrosine phosphorylation-regulated protein (453 aa).

The RIIa domain occupies 12–49 (YGLKTLLEGVSRAILKTNPTNITQFAAVYFKELIVFRE). Disordered stretches follow at residues 86–165 (PIKP…PVSA), 246–278 (PVSE…QVTS), and 406–453 (IINP…PEQV). Residues 143 to 154 (DKPTTPKTDYTP) show a composition bias toward low complexity.

In terms of assembly, interacts with FSCB. Phosphorylated on tyrosine residues during in vitro capacitation. Dephosphorylation affects its ability to bind calcium. As to expression, expressed in spermatozoa.

The protein localises to the cytoplasm. It localises to the cytoskeleton. Its subcellular location is the cell projection. It is found in the cilium. The protein resides in the flagellum. May function as a regulator of both motility- and head-associated functions such as capacitation and the acrosome reaction. May bind calcium in vitro. This chain is Calcium-binding tyrosine phosphorylation-regulated protein (Cabyr), found in Mus musculus (Mouse).